Reading from the N-terminus, the 355-residue chain is UDP-N-acetylglucosamine--N-acetylmuramyl-(pentapeptide) pyrophosphoryl-undecaprenol N-acetylglucosamine transferase (355 aa).

Residues 15 to 17 (TGG), asparagine 127, arginine 163, serine 191, isoleucine 244, 263 to 268 (ALTVSE), and glutamine 288 contribute to the UDP-N-acetyl-alpha-D-glucosamine site.

Belongs to the glycosyltransferase 28 family. MurG subfamily.

Its subcellular location is the cell inner membrane. It carries out the reaction di-trans,octa-cis-undecaprenyl diphospho-N-acetyl-alpha-D-muramoyl-L-alanyl-D-glutamyl-meso-2,6-diaminopimeloyl-D-alanyl-D-alanine + UDP-N-acetyl-alpha-D-glucosamine = di-trans,octa-cis-undecaprenyl diphospho-[N-acetyl-alpha-D-glucosaminyl-(1-&gt;4)]-N-acetyl-alpha-D-muramoyl-L-alanyl-D-glutamyl-meso-2,6-diaminopimeloyl-D-alanyl-D-alanine + UDP + H(+). It functions in the pathway cell wall biogenesis; peptidoglycan biosynthesis. Its function is as follows. Cell wall formation. Catalyzes the transfer of a GlcNAc subunit on undecaprenyl-pyrophosphoryl-MurNAc-pentapeptide (lipid intermediate I) to form undecaprenyl-pyrophosphoryl-MurNAc-(pentapeptide)GlcNAc (lipid intermediate II). This chain is UDP-N-acetylglucosamine--N-acetylmuramyl-(pentapeptide) pyrophosphoryl-undecaprenol N-acetylglucosamine transferase, found in Escherichia coli O45:K1 (strain S88 / ExPEC).